We begin with the raw amino-acid sequence, 354 residues long: Histidinol-phosphate aminotransferase (354 aa).

Lys210 is subject to N6-(pyridoxal phosphate)lysine.

Belongs to the class-II pyridoxal-phosphate-dependent aminotransferase family. Histidinol-phosphate aminotransferase subfamily. Homodimer. Pyridoxal 5'-phosphate is required as a cofactor.

It carries out the reaction L-histidinol phosphate + 2-oxoglutarate = 3-(imidazol-4-yl)-2-oxopropyl phosphate + L-glutamate. It functions in the pathway amino-acid biosynthesis; L-histidine biosynthesis; L-histidine from 5-phospho-alpha-D-ribose 1-diphosphate: step 7/9. This chain is Histidinol-phosphate aminotransferase, found in Clostridium botulinum (strain Langeland / NCTC 10281 / Type F).